We begin with the raw amino-acid sequence, 400 residues long: Nicotinate phosphoribosyltransferase (400 aa).

His-220 is subject to Phosphohistidine; by autocatalysis.

The protein belongs to the NAPRTase family. Post-translationally, transiently phosphorylated on a His residue during the reaction cycle. Phosphorylation strongly increases the affinity for substrates and increases the rate of nicotinate D-ribonucleotide production. Dephosphorylation regenerates the low-affinity form of the enzyme, leading to product release.

The catalysed reaction is nicotinate + 5-phospho-alpha-D-ribose 1-diphosphate + ATP + H2O = nicotinate beta-D-ribonucleotide + ADP + phosphate + diphosphate. The protein operates within cofactor biosynthesis; NAD(+) biosynthesis; nicotinate D-ribonucleotide from nicotinate: step 1/1. Its function is as follows. Catalyzes the synthesis of beta-nicotinate D-ribonucleotide from nicotinate and 5-phospho-D-ribose 1-phosphate at the expense of ATP. The polypeptide is Nicotinate phosphoribosyltransferase (Salmonella typhimurium (strain LT2 / SGSC1412 / ATCC 700720)).